Reading from the N-terminus, the 493-residue chain is L-arabinose isomerase 1 (493 aa).

Residues Glu-301, Glu-326, His-343, and His-442 each coordinate Mn(2+).

This sequence belongs to the arabinose isomerase family. Mn(2+) is required as a cofactor.

The enzyme catalyses beta-L-arabinopyranose = L-ribulose. Its pathway is carbohydrate degradation; L-arabinose degradation via L-ribulose; D-xylulose 5-phosphate from L-arabinose (bacterial route): step 1/3. Functionally, catalyzes the conversion of L-arabinose to L-ribulose. The chain is L-arabinose isomerase 1 from Bacillus licheniformis (strain ATCC 14580 / DSM 13 / JCM 2505 / CCUG 7422 / NBRC 12200 / NCIMB 9375 / NCTC 10341 / NRRL NRS-1264 / Gibson 46).